A 913-amino-acid polypeptide reads, in one-letter code: Protein translocase subunit SecA (913 aa).

ATP is bound by residues glutamine 87, 105-109 (GEGKT), and aspartate 517. 2 disordered regions span residues 568-588 (ESRR…DPGS) and 871-913 (EVAV…GKLS). 4 residues coordinate Zn(2+): cysteine 897, cysteine 899, cysteine 908, and histidine 909. Over residues 903 to 913 (KKYKQCHGKLS) the composition is skewed to basic residues.

Belongs to the SecA family. In terms of assembly, monomer and homodimer. Part of the essential Sec protein translocation apparatus which comprises SecA, SecYEG and auxiliary proteins SecDF-YajC and YidC. Zn(2+) is required as a cofactor.

It localises to the cell inner membrane. Its subcellular location is the cytoplasm. The catalysed reaction is ATP + H2O + cellular proteinSide 1 = ADP + phosphate + cellular proteinSide 2.. In terms of biological role, part of the Sec protein translocase complex. Interacts with the SecYEG preprotein conducting channel. Has a central role in coupling the hydrolysis of ATP to the transfer of proteins into and across the cell membrane, serving both as a receptor for the preprotein-SecB complex and as an ATP-driven molecular motor driving the stepwise translocation of polypeptide chains across the membrane. In Coxiella burnetii (strain RSA 493 / Nine Mile phase I), this protein is Protein translocase subunit SecA.